A 96-amino-acid polypeptide reads, in one-letter code: RxLR effector protein PITG_11507 (96 aa).

The signal sequence occupies residues 1–19 (MRLSFIIVAVSLLAGGSGA). The interval 27-59 (SDVLTSRGTNEGARTGKRSLRYDSNVERTGEED) is disordered. Positions 44–59 (RSLRYDSNVERTGEED) match the RxLR-dEER motif. Over residues 46–55 (LRYDSNVERT) the composition is skewed to basic and acidic residues.

The protein belongs to the RxLR effector family.

The protein resides in the secreted. It is found in the host nucleus. The protein localises to the host cytoplasm. Effector that enhances P.infestans colonization of Nicotiana benthamiana leaves. The chain is RxLR effector protein PITG_11507 from Phytophthora infestans (strain T30-4) (Potato late blight agent).